The sequence spans 149 residues: Calmodulin-1 (149 aa).

At Ala-2 the chain carries N-acetylalanine. EF-hand domains are found at residues 8–43 (DQIA…LGQN), 44–79 (PTEA…KMKD), 81–116 (DSEE…LGEK), and 117–149 (LTDE…MMAK). Residues Asp-21, Asp-23, Asp-25, Cys-27, Glu-32, Asp-57, Asp-59, Asn-61, Thr-63, Glu-68, Asp-94, Asp-96, Asn-98, and Glu-105 each contribute to the Ca(2+) site. An N6,N6,N6-trimethyllysine modification is found at Lys-116. The Ca(2+) site is built by Asp-130, Asp-132, Asp-134, Gln-136, and Glu-141.

This sequence belongs to the calmodulin family.

Functionally, calmodulin mediates the control of a large number of enzymes, ion channels and other proteins by Ca(2+). Among the enzymes to be stimulated by the calmodulin-Ca(2+) complex are a number of protein kinases and phosphatases. This chain is Calmodulin-1 (CAM1-1), found in Oryza sativa subsp. indica (Rice).